Here is a 205-residue protein sequence, read N- to C-terminus: uncharacterized protein (205 aa).

The tract at residues 1 to 42 is disordered; sequence MSRKRDKPYTNRHTPARISKRRRPWAPSSSEHDEIIDKPITK. Residues 14–24 show a composition bias toward basic residues; sequence TPARISKRRRP. The segment covering 30–40 has biased composition (basic and acidic residues); that stretch reads SEHDEIIDKPI. The RRM domain maps to 47 to 122; that stretch reads PALVVMGLPA…KKLEVVWATD (76 aa). The segment at 170–191 is disordered; it reads PRSDNTKGISGDGGISSPATTS.

This is an uncharacterized protein from Arabidopsis thaliana (Mouse-ear cress).